Consider the following 220-residue polypeptide: Small ribosomal subunit protein mS23 (220 aa).

This sequence belongs to the mitochondrion-specific ribosomal protein mS23 family. Component of the mitochondrial small ribosomal subunit (mt-SSU). Mature yeast 74S mitochondrial ribosomes consist of a small (37S) and a large (54S) subunit. The 37S small subunit contains a 15S ribosomal RNA (15S mt-rRNA) and at least 32 different proteins. The 54S large subunit contains a 21S rRNA (21S mt-rRNA) and at least 45 different proteins.

It localises to the mitochondrion. Component of the mitochondrial ribosome (mitoribosome), a dedicated translation machinery responsible for the synthesis of mitochondrial genome-encoded proteins, including at least some of the essential transmembrane subunits of the mitochondrial respiratory chain. The mitoribosomes are attached to the mitochondrial inner membrane and translation products are cotranslationally integrated into the membrane. The protein is Small ribosomal subunit protein mS23 (rsm25) of Schizosaccharomyces pombe (strain 972 / ATCC 24843) (Fission yeast).